We begin with the raw amino-acid sequence, 327 residues long: tRNA N6-adenosine threonylcarbamoyltransferase (327 aa).

Fe cation is bound by residues histidine 107 and histidine 111. Residues 129-133 (LVSGG), aspartate 162, glycine 175, and asparagine 263 each bind substrate. Aspartate 291 lines the Fe cation pocket.

This sequence belongs to the KAE1 / TsaD family. The cofactor is Fe(2+).

The protein resides in the cytoplasm. It carries out the reaction L-threonylcarbamoyladenylate + adenosine(37) in tRNA = N(6)-L-threonylcarbamoyladenosine(37) in tRNA + AMP + H(+). Its function is as follows. Required for the formation of a threonylcarbamoyl group on adenosine at position 37 (t(6)A37) in tRNAs that read codons beginning with adenine. Is involved in the transfer of the threonylcarbamoyl moiety of threonylcarbamoyl-AMP (TC-AMP) to the N6 group of A37, together with TsaE and TsaB. TsaD likely plays a direct catalytic role in this reaction. This chain is tRNA N6-adenosine threonylcarbamoyltransferase, found in Nautilia profundicola (strain ATCC BAA-1463 / DSM 18972 / AmH).